The chain runs to 345 residues: Protein RecA (345 aa).

66–73 (GPESSGKT) contributes to the ATP binding site.

This sequence belongs to the RecA family.

Its subcellular location is the cytoplasm. In terms of biological role, can catalyze the hydrolysis of ATP in the presence of single-stranded DNA, the ATP-dependent uptake of single-stranded DNA by duplex DNA, and the ATP-dependent hybridization of homologous single-stranded DNAs. It interacts with LexA causing its activation and leading to its autocatalytic cleavage. The sequence is that of Protein RecA from Acidithiobacillus ferrooxidans (strain ATCC 23270 / DSM 14882 / CIP 104768 / NCIMB 8455) (Ferrobacillus ferrooxidans (strain ATCC 23270)).